The chain runs to 371 residues: D-alanine--D-alanine ligase (371 aa).

The region spanning 154 to 361 (KKLLVAEGLP…YPTLLAAMVD (208 aa)) is the ATP-grasp domain. 182–237 (RERLGLPVFVKPARGGSSIGVSRVSDWAELPAAIEAARRHDPKVIVEAGIAGRELE) provides a ligand contact to ATP. 3 residues coordinate Mg(2+): Asp-316, Glu-328, and Asn-330.

This sequence belongs to the D-alanine--D-alanine ligase family. Mg(2+) is required as a cofactor. Mn(2+) serves as cofactor.

It localises to the cytoplasm. It catalyses the reaction 2 D-alanine + ATP = D-alanyl-D-alanine + ADP + phosphate + H(+). Its pathway is cell wall biogenesis; peptidoglycan biosynthesis. Its function is as follows. Cell wall formation. This chain is D-alanine--D-alanine ligase, found in Mycobacterium sp. (strain JLS).